A 199-amino-acid polypeptide reads, in one-letter code: Recombination protein RecR (199 aa).

A C4-type zinc finger spans residues 58–73 (CSACGNVDTQDPCAIC). Positions 81-176 (HILCIVEEVG…SVSRLAHGVP (96 aa)) constitute a Toprim domain.

Belongs to the RecR family.

In terms of biological role, may play a role in DNA repair. It seems to be involved in an RecBC-independent recombinational process of DNA repair. It may act with RecF and RecO. The chain is Recombination protein RecR from Parvibaculum lavamentivorans (strain DS-1 / DSM 13023 / NCIMB 13966).